A 183-amino-acid polypeptide reads, in one-letter code: ATP synthase subunit b 2 (183 aa).

Residues 27-47 form a helical membrane-spanning segment; that stretch reads PSFYAFLALLIFFGLLLHMGV.

It belongs to the ATPase B chain family. In terms of assembly, F-type ATPases have 2 components, F(1) - the catalytic core - and F(0) - the membrane proton channel. F(1) has five subunits: alpha(3), beta(3), gamma(1), delta(1), epsilon(1). F(0) has three main subunits: a(1), b(2) and c(10-14). The alpha and beta chains form an alternating ring which encloses part of the gamma chain. F(1) is attached to F(0) by a central stalk formed by the gamma and epsilon chains, while a peripheral stalk is formed by the delta and b chains.

It localises to the cell inner membrane. In terms of biological role, f(1)F(0) ATP synthase produces ATP from ADP in the presence of a proton or sodium gradient. F-type ATPases consist of two structural domains, F(1) containing the extramembraneous catalytic core and F(0) containing the membrane proton channel, linked together by a central stalk and a peripheral stalk. During catalysis, ATP synthesis in the catalytic domain of F(1) is coupled via a rotary mechanism of the central stalk subunits to proton translocation. Its function is as follows. Component of the F(0) channel, it forms part of the peripheral stalk, linking F(1) to F(0). This chain is ATP synthase subunit b 2, found in Maricaulis maris (strain MCS10) (Caulobacter maris).